The chain runs to 146 residues: Single-stranded DNA-binding protein, mitochondrial (146 aa).

A mitochondrion-targeting transit peptide spans 1–16; that stretch reads MLRNASAQILKQFVRH. The SSB domain maps to 29-140; that stretch reads INKVQILGRV…IIADNIVFLS (112 aa).

The protein resides in the mitochondrion. It localises to the mitochondrion matrix. It is found in the mitochondrion nucleoid. Its function is as follows. Binds preferentially and cooperatively to pyrimidine rich single-stranded DNA (ss-DNA). May be required to maintain the copy number of mitochondrial DNA (mtDNA) and play a crucial role during mtDNA replication. Required for retinal ganglion cell differentiation and retinal integrity. The protein is Single-stranded DNA-binding protein, mitochondrial of Danio rerio (Zebrafish).